The chain runs to 297 residues: ATP synthase gamma chain (297 aa).

The protein belongs to the ATPase gamma chain family. In terms of assembly, F-type ATPases have 2 components, CF(1) - the catalytic core - and CF(0) - the membrane proton channel. CF(1) has five subunits: alpha(3), beta(3), gamma(1), delta(1), epsilon(1). CF(0) has three main subunits: a, b and c.

It localises to the cell membrane. Produces ATP from ADP in the presence of a proton gradient across the membrane. The gamma chain is believed to be important in regulating ATPase activity and the flow of protons through the CF(0) complex. The sequence is that of ATP synthase gamma chain from Arthrobacter sp. (strain FB24).